A 262-amino-acid chain; its full sequence is Adenosylcobinamide-GDP ribazoletransferase (262 aa).

6 consecutive transmembrane segments (helical) span residues 43–63 (YFGLVGLLVGLLSAIVFWLTQ), 66–86 (LPAGVSVLLAMLVGVLLTGGF), 120–140 (GALALMLALLLKWQLLVELAL), 146–166 (AGSALIVAHTVSRVVSASIIF), 191–211 (LLILIASGVLVLLFLKGLAAL), and 242–262 (AAQQIAEIVCYFVLLVVGNIL).

This sequence belongs to the CobS family. The cofactor is Mg(2+).

It localises to the cell inner membrane. The catalysed reaction is alpha-ribazole + adenosylcob(III)inamide-GDP = adenosylcob(III)alamin + GMP + H(+). It catalyses the reaction alpha-ribazole 5'-phosphate + adenosylcob(III)inamide-GDP = adenosylcob(III)alamin 5'-phosphate + GMP + H(+). It participates in cofactor biosynthesis; adenosylcobalamin biosynthesis; adenosylcobalamin from cob(II)yrinate a,c-diamide: step 7/7. Joins adenosylcobinamide-GDP and alpha-ribazole to generate adenosylcobalamin (Ado-cobalamin). Also synthesizes adenosylcobalamin 5'-phosphate from adenosylcobinamide-GDP and alpha-ribazole 5'-phosphate. The sequence is that of Adenosylcobinamide-GDP ribazoletransferase from Shewanella baltica (strain OS195).